The primary structure comprises 123 residues: Large ribosomal subunit protein bL12 (123 aa).

This sequence belongs to the bacterial ribosomal protein bL12 family. Homodimer. Part of the ribosomal stalk of the 50S ribosomal subunit. Forms a multimeric L10(L12)X complex, where L10 forms an elongated spine to which 2 to 4 L12 dimers bind in a sequential fashion. Binds GTP-bound translation factors.

Forms part of the ribosomal stalk which helps the ribosome interact with GTP-bound translation factors. Is thus essential for accurate translation. This Rhodopseudomonas palustris (strain HaA2) protein is Large ribosomal subunit protein bL12.